We begin with the raw amino-acid sequence, 191 residues long: 3-isopropylmalate dehydratase small subunit (191 aa).

Belongs to the LeuD family. LeuD type 1 subfamily. In terms of assembly, heterodimer of LeuC and LeuD.

The catalysed reaction is (2R,3S)-3-isopropylmalate = (2S)-2-isopropylmalate. It participates in amino-acid biosynthesis; L-leucine biosynthesis; L-leucine from 3-methyl-2-oxobutanoate: step 2/4. Catalyzes the isomerization between 2-isopropylmalate and 3-isopropylmalate, via the formation of 2-isopropylmaleate. In Anaeromyxobacter dehalogenans (strain 2CP-1 / ATCC BAA-258), this protein is 3-isopropylmalate dehydratase small subunit.